We begin with the raw amino-acid sequence, 212 residues long: Small ribosomal subunit protein eS1 (212 aa).

It belongs to the eukaryotic ribosomal protein eS1 family.

This chain is Small ribosomal subunit protein eS1, found in Haloquadratum walsbyi (strain DSM 16790 / HBSQ001).